Reading from the N-terminus, the 476-residue chain is Serine protease HTRA1B (476 aa).

The first 19 residues, 1–19, serve as a signal peptide directing secretion; the sequence is MRLLILCASIILVPLLCDA. Residues 25-109 enclose the IGFBP N-terminal domain; it reads YVIGCPERCD…RGKTGVCVCK (85 aa). Cystine bridges form between Cys29–Cys54, Cys33–Cys56, Cys38–Cys57, Cys45–Cys60, Cys68–Cys85, and Cys79–Cys106. The Kazal-like domain occupies 94–153; it reads TTTVRRRGKTGVCVCKSSEPVCGSDGVSYRNICELKRVSNRAQKLQQPPIIFIQRGACGK. The segment at 200–360 is serine protease; sequence GSGFVVSEDG…IPSDKIRQFL (161 aa). Catalysis depends on charge relay system residues His216, Asp246, and Ser324. In terms of domain architecture, PDZ spans 361–463; that stretch reads AESHDRQAKG…LRAVVRRGNE (103 aa).

This sequence belongs to the peptidase S1C family. In terms of assembly, forms homotrimers. In the presence of substrate, may form higher-order multimers in a PDZ-independent manner.

Its subcellular location is the secreted. It localises to the cytoplasm. The protein resides in the cytosol. Its function is as follows. Serine protease with a variety of targets, including extracellular matrix proteins and proteoglycans. Through cleavage of proteoglycans, may release soluble FGF-glycosaminoglycan complexes that promote the range and intensity of FGF signals in the extracellular space. Regulates the availability of insulin-like growth factors (IGFs) by cleaving IGF-binding proteins. Inhibits signaling mediated by TGF-beta family members. Consequently, may regulate many physiological processes. Intracellularly, degrades TSC2, leading to the activation of TSC2 downstream targets. The sequence is that of Serine protease HTRA1B (htra1b) from Danio rerio (Zebrafish).